The sequence spans 274 residues: Diaminopimelate epimerase (274 aa).

Residues Asn11, Gln44, and Asn64 each coordinate substrate. Residue Cys73 is the Proton donor of the active site. Residues 74-75, Asn157, Asn190, and 208-209 contribute to the substrate site; these read GN and ER. Cys217 serves as the catalytic Proton acceptor. Residue 218 to 219 participates in substrate binding; that stretch reads GS.

This sequence belongs to the diaminopimelate epimerase family. As to quaternary structure, homodimer (Potential). Previously DapF has been proposed to be a monomer, however it seems that it adopts a dimeric structure.

The protein localises to the cytoplasm. The catalysed reaction is (2S,6S)-2,6-diaminopimelate = meso-2,6-diaminopimelate. It functions in the pathway amino-acid biosynthesis; L-lysine biosynthesis via DAP pathway; DL-2,6-diaminopimelate from LL-2,6-diaminopimelate: step 1/1. With respect to regulation, inhibited by LL-aziridino (LL-AziDAP), DL-aziridino (DL-AziDAP). Also inhibited by (2S,3R,6S)-2,6-diamino-3-fluoropimelate (L,L-3-fluoro-DAP) and (2R,3S,6S)-2,6-diamino-3-fluoropimelate (D,L-3-fluoro-DAP). Its function is as follows. Catalyzes the stereoinversion of LL-2,6-diaminopimelate (L,L-DAP) to meso-diaminopimelate (meso-DAP), a precursor of L-lysine and an essential component of the bacterial peptidoglycan. Only accepts DAP isomers with the L configuration. This is Diaminopimelate epimerase from Haemophilus influenzae (strain ATCC 51907 / DSM 11121 / KW20 / Rd).